A 141-amino-acid chain; its full sequence is Hemoglobin subunit alpha-D (141 aa).

A Globin domain is found at 1–141 (MLTAEDKKLI…VSAVLAEKYR (141 aa)). Heme b contacts are provided by histidine 58 and histidine 87.

This sequence belongs to the globin family. In terms of assembly, heterotetramer of two alpha-D chains and two beta chains. Red blood cells.

Its function is as follows. Involved in oxygen transport from the lung to the various peripheral tissues. This chain is Hemoglobin subunit alpha-D (HBAD), found in Meleagris gallopavo (Wild turkey).